The primary structure comprises 442 residues: C4-dicarboxylate transport protein (442 aa).

8 consecutive transmembrane segments (helical) span residues 10 to 30 (VQVL…PSFG), 40 to 60 (FIKL…VSGI), 77 to 97 (LIYF…VANI), 149 to 169 (LLQV…LGTL), 185 to 205 (FVIL…AMAF), 221 to 241 (LMVA…GLIA), 288 to 308 (VVGL…SIYL), and 354 to 374 (AATL…ILGI). The segment at 420–442 (PATPEVAAEERGEGRGLDGPLPA) is disordered.

The protein belongs to the dicarboxylate/amino acid:cation symporter (DAACS) (TC 2.A.23) family.

It is found in the cell membrane. In terms of biological role, responsible for the transport of dicarboxylates such as succinate, fumarate, and malate across the membrane. The chain is C4-dicarboxylate transport protein from Deinococcus geothermalis (strain DSM 11300 / CIP 105573 / AG-3a).